The primary structure comprises 955 residues: Glycine dehydrogenase (decarboxylating) (955 aa).

Lys705 bears the N6-(pyridoxal phosphate)lysine mark.

This sequence belongs to the GcvP family. As to quaternary structure, the glycine cleavage system is composed of four proteins: P, T, L and H. Pyridoxal 5'-phosphate serves as cofactor.

The enzyme catalyses N(6)-[(R)-lipoyl]-L-lysyl-[glycine-cleavage complex H protein] + glycine + H(+) = N(6)-[(R)-S(8)-aminomethyldihydrolipoyl]-L-lysyl-[glycine-cleavage complex H protein] + CO2. Its function is as follows. The glycine cleavage system catalyzes the degradation of glycine. The P protein binds the alpha-amino group of glycine through its pyridoxal phosphate cofactor; CO(2) is released and the remaining methylamine moiety is then transferred to the lipoamide cofactor of the H protein. The sequence is that of Glycine dehydrogenase (decarboxylating) from Aliivibrio salmonicida (strain LFI1238) (Vibrio salmonicida (strain LFI1238)).